Consider the following 295-residue polypeptide: Protease HtpX (295 aa).

The next 2 helical transmembrane spans lie at 4-24 (ILLF…TLSL) and 42-62 (QLLV…LFIS). A Zn(2+)-binding site is contributed by H147. E148 is an active-site residue. H151 contacts Zn(2+). 2 helical membrane-spanning segments follow: residues 158–178 (VTLA…ARII) and 195–215 (IAYF…ASAI). E224 provides a ligand contact to Zn(2+).

Belongs to the peptidase M48B family. Zn(2+) is required as a cofactor.

The protein resides in the cell inner membrane. In Pseudomonas fluorescens (strain SBW25), this protein is Protease HtpX.